Here is a 464-residue protein sequence, read N- to C-terminus: Chitobiosyldiphosphodolichol beta-mannosyltransferase (464 aa).

Residues Met1–Ala2 are Lumenal-facing. The helical transmembrane segment at Ala3 to Trp23 threads the bilayer. Residues Lys24–Arg99 lie on the Cytoplasmic side of the membrane. The helical intramembrane region spans Val100 to Trp120. Residues Arg121–Thr464 lie on the Cytoplasmic side of the membrane. Phosphoserine is present on Ser242. The disordered stretch occupies residues Pro243–Glu262.

It belongs to the glycosyltransferase group 1 family. Glycosyltransferase 33 subfamily.

It localises to the endoplasmic reticulum membrane. It carries out the reaction an N,N'-diacetylchitobiosyl-diphospho-di-trans,poly-cis-dolichol + GDP-alpha-D-mannose = a beta-D-Man-(1-&gt;4)-beta-D-GlcNAc-(1-&gt;4)-alpha-D-GlcNAc-diphospho-di-trans,poly-cis-dolichol + GDP + H(+). Its pathway is protein modification; protein glycosylation. In terms of biological role, mannosyltransferase that operates in the biosynthetic pathway of dolichol-linked oligosaccharides, the glycan precursors employed in protein asparagine (N)-glycosylation. The assembly of dolichol-linked oligosaccharides begins on the cytosolic side of the endoplasmic reticulum membrane and finishes in its lumen. The sequential addition of sugars to dolichol pyrophosphate produces dolichol-linked oligosaccharides containing fourteen sugars, including two GlcNAcs, nine mannoses and three glucoses. Once assembled, the oligosaccharide is transferred from the lipid to nascent proteins by oligosaccharyltransferases. Catalyzes, on the cytoplasmic face of the endoplasmic reticulum, the addition of the first mannose residues to the dolichol-linked oligosaccharide chain, to produce Man1GlcNAc(2)-PP-dolichol core oligosaccharide. Man1GlcNAc(2)-PP-dolichol is a substrate for ALG2, the following enzyme in the biosynthetic pathway. This chain is Chitobiosyldiphosphodolichol beta-mannosyltransferase, found in Homo sapiens (Human).